Consider the following 618-residue polypeptide: MLQTYAPIDFRNNDPYNTDFEDIYYNPALGFAESDHVFIAGNHLRERFSALPEYGRFTLAETGFGTGLNMINAAAHFLECAPKTAALNLISCEAYPIELETLKRIHHHWHHHELRIALYQNYPHRASGMHLIRLHPRVCLLLLWGDATRCYQACMARVNAWFLDGFAPSKNPQMWQPELFREIARLSQPNATLATFTVAAQVREQLTAVGFNVHKQTGFAQKRHMLSAVYERPLSVEKSWTDYPAPKFDTRPIAVIGAGIAGATTAYELAQRGKVVHVYHDPENPCASAVPVAVPFFLPGKTDTPMRQFHLAAWHDLCRELKCCPQGIVDRMPIALAVAEESLARRKESLADLFEPEQADIEAKKLYFYQAGALDTPRLLTYLLADKNITQYAQKIAQLTPQAEGWRIGEQIYARVVLATSWQEQLLPNALQKRMRTVRGQATFFALNAPVAGEIFCAERSFIPLPDRVHMHVGSSYSVNDCDRMRRTQDDAEHAEACRARFPQHAIQLERAFVGIRAASRDYLPLIGAVVRAESVYQRYQKWSKDRNIPINEEIDYYPQLYMHSGLGSKGTLTAFLGAKILAAMMLGDPLPIDRKLLTSIVPTRFLVKDIIRGHLNN.

A tRNA (mnm(5)s(2)U34)-methyltransferase region spans residues 1–231; it reads MLQTYAPIDF…KRHMLSAVYE (231 aa). Positions 256-618 are FAD-dependent cmnm(5)s(2)U34 oxidoreductase; sequence IGAGIAGATT…KDIIRGHLNN (363 aa).

This sequence in the N-terminal section; belongs to the methyltransferase superfamily. tRNA (mnm(5)s(2)U34)-methyltransferase family. The protein in the C-terminal section; belongs to the DAO family. FAD is required as a cofactor.

The protein localises to the cytoplasm. The catalysed reaction is 5-aminomethyl-2-thiouridine(34) in tRNA + S-adenosyl-L-methionine = 5-methylaminomethyl-2-thiouridine(34) in tRNA + S-adenosyl-L-homocysteine + H(+). Its function is as follows. Catalyzes the last two steps in the biosynthesis of 5-methylaminomethyl-2-thiouridine (mnm(5)s(2)U) at the wobble position (U34) in tRNA. Catalyzes the FAD-dependent demodification of cmnm(5)s(2)U34 to nm(5)s(2)U34, followed by the transfer of a methyl group from S-adenosyl-L-methionine to nm(5)s(2)U34, to form mnm(5)s(2)U34. The protein is tRNA 5-methylaminomethyl-2-thiouridine biosynthesis bifunctional protein MnmC of Dichelobacter nodosus (strain VCS1703A).